A 491-amino-acid polypeptide reads, in one-letter code: Cytosolic Fe-S cluster assembly factor NAR1 (491 aa).

Cys20, Cys65, Cys68, Cys71, Cys177, Cys232, Cys414, and Cys418 together coordinate [4Fe-4S] cluster.

This sequence belongs to the NARF family.

Its function is as follows. Component of the cytosolic Fe/S protein assembly machinery. Required for maturation of extramitochondrial Fe/S proteins. May play a role in the transfer of pre-assembled Fe/S clusters to target apoproteins. This chain is Cytosolic Fe-S cluster assembly factor NAR1 (NAR1), found in Yarrowia lipolytica (strain CLIB 122 / E 150) (Yeast).